A 79-amino-acid chain; its full sequence is uncharacterized protein (79 aa).

Residues 20–52 (TERGAGLSPAAPPDPSPAIAPTMAEGGVPSPGP) form a disordered region.

This is an uncharacterized protein from Homo sapiens (Human).